A 259-amino-acid polypeptide reads, in one-letter code: Triosephosphate isomerase (259 aa).

10–12 (NWK) contributes to the substrate binding site. Histidine 102 serves as the catalytic Electrophile. Glutamate 172 acts as the Proton acceptor in catalysis. Substrate contacts are provided by residues glycine 178, serine 218, and 239–240 (GG).

This sequence belongs to the triosephosphate isomerase family. In terms of assembly, homodimer.

It is found in the cytoplasm. The catalysed reaction is D-glyceraldehyde 3-phosphate = dihydroxyacetone phosphate. Its pathway is carbohydrate biosynthesis; gluconeogenesis. It functions in the pathway carbohydrate degradation; glycolysis; D-glyceraldehyde 3-phosphate from glycerone phosphate: step 1/1. In terms of biological role, involved in the gluconeogenesis. Catalyzes stereospecifically the conversion of dihydroxyacetone phosphate (DHAP) to D-glyceraldehyde-3-phosphate (G3P). In Leifsonia xyli subsp. xyli (strain CTCB07), this protein is Triosephosphate isomerase.